The chain runs to 399 residues: Subtilisin-like protease 4 (399 aa).

Residues 1–19 (MVCLKTLSVFLAAFAVADA) form the signal peptide. The propeptide occupies 20–118 (RAVFKTQSNK…VEQDQVVRIS (99 aa)). In terms of domain architecture, Inhibitor I9 spans 38–117 (YIVVMKDGVS…YVEQDQVVRI (80 aa)). The Peptidase S8 domain maps to 128 to 399 (SWGLGRVSHR…NRLLYNGSGQ (272 aa)). Residues Asp-160 and His-191 each act as charge relay system in the active site. Residue Asn-252 is glycosylated (N-linked (GlcNAc...) asparagine). The Charge relay system role is filled by Ser-346. Over residues 380-392 (AISNPGSGTTNRL) the composition is skewed to polar residues. The tract at residues 380 to 399 (AISNPGSGTTNRLLYNGSGQ) is disordered. Residue Asn-395 is glycosylated (N-linked (GlcNAc...) asparagine).

The protein belongs to the peptidase S8 family.

It localises to the secreted. Functionally, secreted subtilisin-like serine protease with keratinolytic activity that contributes to pathogenicity. This chain is Subtilisin-like protease 4 (SUB4), found in Arthroderma gypseum (strain ATCC MYA-4604 / CBS 118893) (Microsporum gypseum).